A 136-amino-acid chain; its full sequence is Ribosome-binding factor A (136 aa).

A disordered region spans residues 114 to 136 (DRANRPGPAADEPDEPDEPEDRR). Residues 124 to 136 (DEPDEPDEPEDRR) show a composition bias toward acidic residues.

The protein belongs to the RbfA family. In terms of assembly, monomer. Binds 30S ribosomal subunits, but not 50S ribosomal subunits or 70S ribosomes.

It is found in the cytoplasm. One of several proteins that assist in the late maturation steps of the functional core of the 30S ribosomal subunit. Associates with free 30S ribosomal subunits (but not with 30S subunits that are part of 70S ribosomes or polysomes). Required for efficient processing of 16S rRNA. May interact with the 5'-terminal helix region of 16S rRNA. In Bordetella petrii (strain ATCC BAA-461 / DSM 12804 / CCUG 43448), this protein is Ribosome-binding factor A.